A 218-amino-acid chain; its full sequence is Histidine biosynthesis bifunctional protein HisIE (218 aa).

A phosphoribosyl-AMP cyclohydrolase region spans residues 1-118 (MTDLSELNFD…DAPDTGLDGT (118 aa)). Residues 119-218 (LERVYATITE…SGLKGPKEVG (100 aa)) form a phosphoribosyl-ATP pyrophosphohydrolase region.

It in the N-terminal section; belongs to the PRA-CH family. This sequence in the C-terminal section; belongs to the PRA-PH family.

It localises to the cytoplasm. It carries out the reaction 1-(5-phospho-beta-D-ribosyl)-ATP + H2O = 1-(5-phospho-beta-D-ribosyl)-5'-AMP + diphosphate + H(+). The enzyme catalyses 1-(5-phospho-beta-D-ribosyl)-5'-AMP + H2O = 1-(5-phospho-beta-D-ribosyl)-5-[(5-phospho-beta-D-ribosylamino)methylideneamino]imidazole-4-carboxamide. The protein operates within amino-acid biosynthesis; L-histidine biosynthesis; L-histidine from 5-phospho-alpha-D-ribose 1-diphosphate: step 2/9. It participates in amino-acid biosynthesis; L-histidine biosynthesis; L-histidine from 5-phospho-alpha-D-ribose 1-diphosphate: step 3/9. In Deinococcus radiodurans (strain ATCC 13939 / DSM 20539 / JCM 16871 / CCUG 27074 / LMG 4051 / NBRC 15346 / NCIMB 9279 / VKM B-1422 / R1), this protein is Histidine biosynthesis bifunctional protein HisIE (hisI).